The chain runs to 72 residues: ATP synthase subunit c (72 aa).

The next 2 helical transmembrane spans lie at 5–25 (LLAAGIAVLAGIGAGIGIGIA) and 52–72 (GLSEATAIYGLVISIILLFVV).

Belongs to the ATPase C chain family. As to quaternary structure, F-type ATPases have 2 components, F(1) - the catalytic core - and F(0) - the membrane proton channel. F(1) has five subunits: alpha(3), beta(3), gamma(1), delta(1), epsilon(1). F(0) has three main subunits: a(1), b(2) and c(10-14). The alpha and beta chains form an alternating ring which encloses part of the gamma chain. F(1) is attached to F(0) by a central stalk formed by the gamma and epsilon chains, while a peripheral stalk is formed by the delta and b chains.

The protein resides in the cell membrane. Functionally, f(1)F(0) ATP synthase produces ATP from ADP in the presence of a proton or sodium gradient. F-type ATPases consist of two structural domains, F(1) containing the extramembraneous catalytic core and F(0) containing the membrane proton channel, linked together by a central stalk and a peripheral stalk. During catalysis, ATP synthesis in the catalytic domain of F(1) is coupled via a rotary mechanism of the central stalk subunits to proton translocation. In terms of biological role, key component of the F(0) channel; it plays a direct role in translocation across the membrane. A homomeric c-ring of between 10-14 subunits forms the central stalk rotor element with the F(1) delta and epsilon subunits. This is ATP synthase subunit c from Clostridium perfringens (strain SM101 / Type A).